Here is a 420-residue protein sequence, read N- to C-terminus: Putative kinase Y4mE (420 aa).

Residue Asp302 is the Proton acceptor of the active site.

Belongs to the HipA Ser/Thr kinase family.

The protein is Putative kinase Y4mE of Sinorhizobium fredii (strain NBRC 101917 / NGR234).